Consider the following 549-residue polypeptide: Urocanate hydratase (549 aa).

NAD(+) is bound by residues Gly46–Gly47, Gln124, Gly170–Gly172, Glu190, Arg195, Asn236–Ala237, Gln257–His261, Tyr267–Val268, and Tyr316. Cys404 is a catalytic residue. Gly486 serves as a coordination point for NAD(+).

It belongs to the urocanase family. It depends on NAD(+) as a cofactor.

Its subcellular location is the cytoplasm. It catalyses the reaction 4-imidazolone-5-propanoate = trans-urocanate + H2O. It functions in the pathway amino-acid degradation; L-histidine degradation into L-glutamate; N-formimidoyl-L-glutamate from L-histidine: step 2/3. Functionally, catalyzes the conversion of urocanate to 4-imidazolone-5-propionate. The polypeptide is Urocanate hydratase (Caldanaerobacter subterraneus subsp. tengcongensis (strain DSM 15242 / JCM 11007 / NBRC 100824 / MB4) (Thermoanaerobacter tengcongensis)).